A 127-amino-acid polypeptide reads, in one-letter code: Putative pre-16S rRNA nuclease (127 aa).

Belongs to the YqgF nuclease family.

The protein localises to the cytoplasm. Functionally, could be a nuclease involved in processing of the 5'-end of pre-16S rRNA. This is Putative pre-16S rRNA nuclease from Campylobacter jejuni subsp. jejuni serotype O:23/36 (strain 81-176).